Reading from the N-terminus, the 281-residue chain is MTQKIIRVGNIEIANDKPFVLFGGMNVLESRDLAMKVCEEYVRVTEKLGIPYVFKASFDKANRSSVTSYRGPGMEEGLKIFEEIKRTFNVPVITDVHEPYQAEPVAKVCDIIQLPAFLSRQTDLVVAMAKTGAVINIKKAQFLAPQEMKHILAKCEEAGNDQLILCERGSSFGYNNLVVDMLGFGIMKQFEYPVFFDVTHALQMPGGRSDSAGGRRAQVTDLAKAGMSQGLAGLFLEAHPDPDNAKCDGPCALRLDKLEPFLAQLKQLDDLVKSFPTVETA.

This sequence belongs to the KdsA family.

The protein resides in the cytoplasm. It catalyses the reaction D-arabinose 5-phosphate + phosphoenolpyruvate + H2O = 3-deoxy-alpha-D-manno-2-octulosonate-8-phosphate + phosphate. The protein operates within carbohydrate biosynthesis; 3-deoxy-D-manno-octulosonate biosynthesis; 3-deoxy-D-manno-octulosonate from D-ribulose 5-phosphate: step 2/3. Its pathway is bacterial outer membrane biogenesis; lipopolysaccharide biosynthesis. This Pseudomonas putida (strain GB-1) protein is 2-dehydro-3-deoxyphosphooctonate aldolase.